The following is a 1394-amino-acid chain: ABC transporter patM (1394 aa).

The tract at residues 1–41 (MVDNYHSSLDVAKTPIQSDADAQKSEAETEGPSSKSSQIAA) is disordered. The region spanning 98–341 (SPLQNRQRKQ…FEDLGFECLS (244 aa)) is the ABC transporter 1 domain. 6 consecutive transmembrane segments (helical) span residues 437-457 (SLWAVELATIVVQSLVLGTLF), 467-487 (LFIFASALFYSVLVPALQSMA), 511-531 (IAYALGLVTTDVVWKVAAICY), 546-566 (GNFFTWFLIIYLEHLALSMFF), 579-599 (AVLPVGIFFNMYVLYTGLYVP), and 688-708 (VGINAALFVFFALCSGIGMEM). The segment at 727-755 (VTHRRDKIDSETGQDQGNESSEMSAGQSN) is disordered. Over residues 737 to 755 (ETGQDQGNESSEMSAGQSN) the composition is skewed to polar residues. An ABC transporter 2 domain is found at 767–1013 (DKSHNLAWTN…EAIQYFQPRS (247 aa)). An ATP-binding site is contributed by 808–815 (GVSGAGKT). 6 consecutive transmembrane segments (helical) span residues 1131-1151 (GAYNRVFSAFMSLIVGPPLGL), 1177-1197 (LAFVLSAFIVELPFTFLSSLV), 1219-1239 (FLMYELFGVFATSLAQLCASL), 1245-1265 (AAFAANGFFFMFCNTFAGTLS), 1280-1300 (ISPLFYLGEGVTVDVLQDLPI), and 1368-1388 (IGVFICFIAFNFTMVLVMTYL).

Belongs to the ABC transporter superfamily. ABCG family. PDR (TC 3.A.1.205) subfamily.

The protein resides in the vacuole membrane. Its subcellular location is the cell membrane. The protein operates within mycotoxin biosynthesis; patulin biosynthesis. Its function is as follows. ABC transporter; part of the gene cluster that mediates the biosynthesis of patulin, an acetate-derived tetraketide mycotoxin produced by several fungal species that shows antimicrobial properties against several bacteria. May be involved in the secretion of E-ascladiol to be converted to patulin by the secreted patulin synthase patE. The polypeptide is ABC transporter patM (Penicillium expansum (Blue mold rot fungus)).